A 347-amino-acid polypeptide reads, in one-letter code: Homocysteine S-methyltransferase 3 (347 aa).

Residues 12–333 (LMTDFLEKCG…NTIRAIAKVL (322 aa)) form the Hcy-binding domain. Positions 251, 318, and 319 each coordinate Zn(2+).

In terms of assembly, monomer. Zn(2+) serves as cofactor. Expressed predominantly in rosette leaves. Expressed in roots, cauline leaves and developing seeds.

The enzyme catalyses S-methyl-L-methionine + L-homocysteine = 2 L-methionine + H(+). In terms of biological role, catalyzes methyl transfer from S-methylmethionine (SMM) to adenosyl-L-homocysteine (AdoMet). SMM degradation (by HMT-1, HMT-2 and HMT-3) and biosynthesis (by MMT1) constitute the SMM cycle in plants, which is probably required to achieve short term control of AdoMet level. The sequence is that of Homocysteine S-methyltransferase 3 (HMT3) from Arabidopsis thaliana (Mouse-ear cress).